We begin with the raw amino-acid sequence, 244 residues long: B3 domain-containing protein At2g36080 (244 aa).

A DNA-binding region (TF-B3) is located at residues 38-144 (FEKPLTPSDV…RFFIGWRRRG (107 aa)).

It is found in the nucleus. The protein is B3 domain-containing protein At2g36080 (ARF31) of Arabidopsis thaliana (Mouse-ear cress).